Reading from the N-terminus, the 271-residue chain is Aquaporin-2 (271 aa).

The Cytoplasmic portion of the chain corresponds to 1–11; it reads MWELRSIAFSR. The helical transmembrane segment at 12-32 threads the bilayer; the sequence is AVLAEFLATLLFVFFGLGSAL. Over 33-40 the chain is Extracellular; the sequence is QWASSPPS. The helical transmembrane segment at 41–59 threads the bilayer; it reads VLQIAVAFGLGIGILVQAL. Over 60–64 the chain is Cytoplasmic; the sequence is GHVSG. Residues 65 to 74 constitute an intramembrane region (discontinuously helical); it reads AHINPAVTVA. The short motif at 68 to 70 is the NPA 1 element; it reads NPA. Residues 75–85 are Cytoplasmic-facing; sequence CLVGCHVSFLR. Residues 86-107 form a helical membrane-spanning segment; that stretch reads AAFYVAAQLLGAVAGAAILHEI. Residues 108–127 are Extracellular-facing; it reads TPVEIRGDLAVNALHNNATA. Asn-124 is a glycosylation site (N-linked (GlcNAc...) asparagine). The chain crosses the membrane as a helical span at residues 128-148; the sequence is GQAVTVELFLTMQLVLCIFAS. Residues 149 to 156 are Cytoplasmic-facing; the sequence is TDERRGDN. A helical membrane pass occupies residues 157–176; it reads LGSPALSIGFSVTLGHLLGI. Topologically, residues 177–180 are extracellular; that stretch reads YFTG. Residues 181–193 constitute an intramembrane region (discontinuously helical); sequence CSMNPARSLAPAV. Positions 184 to 186 match the NPA 2 motif; it reads NPA. Over 194 to 201 the chain is Extracellular; sequence VTGKFDDH. A helical membrane pass occupies residues 202–222; that stretch reads WVFWIGPLVGAIIGSLLYNYL. Over 223-271 the chain is Cytoplasmic; that stretch reads LFPSAKSLQERLAVLKGLEPDTDWEEREVRRRQSVELHSPQSLPRGSKA. Positions 251-271 are disordered; sequence VRRRQSVELHSPQSLPRGSKA. A phosphoserine mark is found at Ser-256, Ser-261, Ser-264, and Ser-269. Positions 261 to 271 are enriched in polar residues; the sequence is SPQSLPRGSKA.

The protein belongs to the MIP/aquaporin (TC 1.A.8) family. As to quaternary structure, homotetramer. Post-translationally, ser-256 phosphorylation is necessary and sufficient for expression at the apical membrane. Endocytosis is not phosphorylation-dependent. N-glycosylated. In terms of tissue distribution, detected in kidney, in cortical and the medullary collecting tubules (at protein level). Detected in kidney medulla and cortex.

The protein localises to the apical cell membrane. The protein resides in the basolateral cell membrane. It localises to the cell membrane. It is found in the cytoplasmic vesicle membrane. Its subcellular location is the golgi apparatus. The protein localises to the trans-Golgi network membrane. It carries out the reaction H2O(in) = H2O(out). The enzyme catalyses glycerol(in) = glycerol(out). In terms of biological role, forms a water-specific channel that provides the plasma membranes of renal collecting duct with high permeability to water, thereby permitting water to move in the direction of an osmotic gradient. Plays an essential role in renal water homeostasis. Could also be permeable to glycerol. In Rattus norvegicus (Rat), this protein is Aquaporin-2.